Consider the following 284-residue polypeptide: D-tagatose-1,6-bisphosphate aldolase subunit GatY (284 aa).

Asp82 functions as the Proton donor in the catalytic mechanism. 2 residues coordinate Zn(2+): His83 and His180. Gly181 serves as a coordination point for dihydroxyacetone phosphate. A Zn(2+)-binding site is contributed by His208. Dihydroxyacetone phosphate is bound by residues 209–211 (GAS) and 230–233 (NVAT).

This sequence belongs to the class II fructose-bisphosphate aldolase family. TagBP aldolase GatY subfamily. As to quaternary structure, forms a complex with GatZ. Zn(2+) is required as a cofactor.

It catalyses the reaction D-tagatofuranose 1,6-bisphosphate = D-glyceraldehyde 3-phosphate + dihydroxyacetone phosphate. It participates in carbohydrate metabolism; D-tagatose 6-phosphate degradation; D-glyceraldehyde 3-phosphate and glycerone phosphate from D-tagatose 6-phosphate: step 2/2. Its function is as follows. Catalytic subunit of the tagatose-1,6-bisphosphate aldolase GatYZ, which catalyzes the reversible aldol condensation of dihydroxyacetone phosphate (DHAP or glycerone-phosphate) with glyceraldehyde 3-phosphate (G3P) to produce tagatose 1,6-bisphosphate (TBP). Requires GatZ subunit for full activity and stability. Is involved in the catabolism of galactitol. In Escherichia coli O157:H7, this protein is D-tagatose-1,6-bisphosphate aldolase subunit GatY.